The primary structure comprises 82 residues: MKLTCMMIVAVLFLTAWTLVMADDSNNGLANLFSKSRDEMEDPEASKLEKKDCQEKWDFCPAPFFGSRYCCFGLFCTLFFCA.

An N-terminal signal peptide occupies residues 1–22 (MKLTCMMIVAVLFLTAWTLVMA). A propeptide spanning residues 23–49 (DDSNNGLANLFSKSRDEMEDPEASKLE) is cleaved from the precursor. 3 cysteine pairs are disulfide-bonded: Cys-53/Cys-71, Cys-60/Cys-76, and Cys-70/Cys-81.

This sequence belongs to the conotoxin O1 superfamily. In terms of tissue distribution, expressed by the venom duct.

Its subcellular location is the secreted. Its function is as follows. Omega-conotoxins act at presynaptic membranes, they bind and block voltage-gated calcium channels (Cav). The chain is Omega-conotoxin-like TxMKLT1-031 from Conus textile (Cloth-of-gold cone).